Here is a 609-residue protein sequence, read N- to C-terminus: UvrABC system protein C (609 aa).

Positions 15-92 (TGSGVYQIQD…IKQFRPRYNV (78 aa)) constitute a GIY-YIG domain. Residues 202–237 (DQVIIKLTERMEVASENLVFEEAAHYRDQIRQLRRL) enclose the UVR domain.

It belongs to the UvrC family. In terms of assembly, interacts with UvrB in an incision complex.

It localises to the cytoplasm. The UvrABC repair system catalyzes the recognition and processing of DNA lesions. UvrC both incises the 5' and 3' sides of the lesion. The N-terminal half is responsible for the 3' incision and the C-terminal half is responsible for the 5' incision. In Coxiella burnetii (strain Dugway 5J108-111), this protein is UvrABC system protein C.